A 241-amino-acid chain; its full sequence is DNA repair protein RecO (241 aa).

This sequence belongs to the RecO family.

Its function is as follows. Involved in DNA repair and RecF pathway recombination. The polypeptide is DNA repair protein RecO (Azobacteroides pseudotrichonymphae genomovar. CFP2).